The following is a 375-amino-acid chain: Fructose-1,6-bisphosphate aldolase/phosphatase (375 aa).

Asp-15 serves as the catalytic Proton acceptor; for FBP phosphatase activity. 4 residues coordinate Mg(2+): Asp-15, His-22, Asp-56, and Asp-57. Residue His-22 participates in beta-D-fructose 1,6-bisphosphate binding. His-22 serves as a coordination point for dihydroxyacetone phosphate. Tyr-94 is a beta-D-fructose 1,6-bisphosphate binding site. Gln-98 contributes to the Mg(2+) binding site. 107-108 is a beta-D-fructose 1,6-bisphosphate binding site; that stretch reads GN. A Mg(2+)-binding site is contributed by Asp-135. Lys-136 provides a ligand contact to beta-D-fructose 1,6-bisphosphate. Lys-136 serves as a coordination point for dihydroxyacetone phosphate. Tyr-237 acts as the Proton donor/acceptor; for FBP aldolase activity in catalysis. 3 residues coordinate Mg(2+): Lys-240, Asp-241, and Asp-242. The Schiff-base intermediate with DHAP; for FBP aldolase activity role is filled by Lys-240. Beta-D-fructose 1,6-bisphosphate-binding positions include 250–251, Arg-274, Asp-295, and Tyr-357; that span reads QS. Residues Arg-274 and Asp-295 each coordinate dihydroxyacetone phosphate.

This sequence belongs to the FBP aldolase/phosphatase family. In terms of assembly, homooctamer; dimer of tetramers. Mg(2+) serves as cofactor.

It carries out the reaction beta-D-fructose 1,6-bisphosphate = D-glyceraldehyde 3-phosphate + dihydroxyacetone phosphate. The enzyme catalyses beta-D-fructose 1,6-bisphosphate + H2O = beta-D-fructose 6-phosphate + phosphate. The protein operates within carbohydrate biosynthesis; gluconeogenesis. With respect to regulation, FBPase activity is inhibited by Ca(2+), ATP, ADP and phosphoenolpyruvate. Its function is as follows. Catalyzes two subsequent steps in gluconeogenesis: the aldol condensation of dihydroxyacetone phosphate (DHAP) and glyceraldehyde-3-phosphate (GA3P) to fructose-1,6-bisphosphate (FBP), and the dephosphorylation of FBP to fructose-6-phosphate (F6P). Can also dephosphorylate, with lower activity, other related substrates including fructose-1-phosphate, fructose-6-phosphate, glucose-1-phosphate, glucose-6-phosphate, glycerol-2-phosphate, phosphoenolpyruvate, 5'-AMP, 6'-ADP and 7'-ATP. This Thermococcus onnurineus (strain NA1) protein is Fructose-1,6-bisphosphate aldolase/phosphatase.